The primary structure comprises 478 residues: Aspartyl/glutamyl-tRNA(Asn/Gln) amidotransferase subunit B (478 aa).

Belongs to the GatB/GatE family. GatB subfamily. Heterotrimer of A, B and C subunits.

It catalyses the reaction L-glutamyl-tRNA(Gln) + L-glutamine + ATP + H2O = L-glutaminyl-tRNA(Gln) + L-glutamate + ADP + phosphate + H(+). The enzyme catalyses L-aspartyl-tRNA(Asn) + L-glutamine + ATP + H2O = L-asparaginyl-tRNA(Asn) + L-glutamate + ADP + phosphate + 2 H(+). In terms of biological role, allows the formation of correctly charged Asn-tRNA(Asn) or Gln-tRNA(Gln) through the transamidation of misacylated Asp-tRNA(Asn) or Glu-tRNA(Gln) in organisms which lack either or both of asparaginyl-tRNA or glutaminyl-tRNA synthetases. The reaction takes place in the presence of glutamine and ATP through an activated phospho-Asp-tRNA(Asn) or phospho-Glu-tRNA(Gln). This chain is Aspartyl/glutamyl-tRNA(Asn/Gln) amidotransferase subunit B, found in Pseudothermotoga lettingae (strain ATCC BAA-301 / DSM 14385 / NBRC 107922 / TMO) (Thermotoga lettingae).